We begin with the raw amino-acid sequence, 795 residues long: Myosin light chain kinase 3 (795 aa).

Serine 155 is modified (phosphoserine). 2 disordered regions span residues 236-257 (GPGQVPLPTEAESRLPETASEN) and 305-328 (SSGPLPQPLGPLTPDSDIHSGDAL). A phosphoserine mark is found at serine 351 and serine 432. Residues 367–452 (DQIPKGARPF…GPGRTEAGRL (86 aa)) form a disordered region. A Protein kinase domain is found at 491 to 746 (VSQHEVLGGG…ATQCLKHEWL (256 aa)). ATP contacts are provided by residues 497-505 (LGGGRFGQV) and lysine 520. Aspartate 612 functions as the Proton acceptor in the catalytic mechanism.

Belongs to the protein kinase superfamily. CAMK Ser/Thr protein kinase family. It depends on Mg(2+) as a cofactor. Phosphorylated on serine residues. As to expression, restricted to cardiomyocytes (at protein level). Down-regulated in heart after experimental myocardial infarction at the protein level; no significant changes at the mRNA level.

The protein resides in the cytoplasm. The enzyme catalyses L-seryl-[myosin light chain] + ATP = O-phospho-L-seryl-[myosin light chain] + ADP + H(+). It catalyses the reaction L-threonyl-[myosin light chain] + ATP = O-phospho-L-threonyl-[myosin light chain] + ADP + H(+). Kinase that phosphorylates MYL2 in vitro. Has been proposed to be calmodulin-dependent, although MYL2 phosphorylation has also been observed in the presence or absence of calmodulin. Promotes sarcomere formation in cardiomyocytes and increases cardiomyocyte contractility. This Mus musculus (Mouse) protein is Myosin light chain kinase 3 (Mylk3).